A 113-amino-acid polypeptide reads, in one-letter code: Hemerythrin (113 aa).

The Fe cation site is built by His-25, His-54, Glu-58, His-73, His-77, His-101, and Asp-106.

It belongs to the hemerythrin family. As to quaternary structure, homotrimer.

In terms of biological role, hemerythrin is a respiratory protein in blood cells of certain marine worms. The oxygen-binding site in each chain contains two iron atoms. The chain is Hemerythrin from Siphonosoma cumanense (Sipunculan worm).